Here is a 344-residue protein sequence, read N- to C-terminus: L-rhamnose-proton symporter (344 aa).

The next 10 helical transmembrane spans lie at 4–24 (AITM…CFYA), 38–58 (WSVG…ALLL), 68–88 (FNLS…IGNI), 101–121 (MGIG…TPII), 137–157 (TLLG…AGQL), 175–195 (LLLA…MNAA), 214–234 (LPSY…FCFI), 259–279 (ILLS…YAWG), 290–310 (MSWM…GLVL), and 321–341 (VAVL…VGLG).

The protein belongs to the L-rhamnose transporter (TC 2.A.7.6) family.

It localises to the cell inner membrane. The catalysed reaction is L-rhamnopyranose(in) + H(+)(in) = L-rhamnopyranose(out) + H(+)(out). Functionally, uptake of L-rhamnose across the cytoplasmic membrane with the concomitant transport of protons into the cell (symport system). The sequence is that of L-rhamnose-proton symporter from Salmonella paratyphi A (strain ATCC 9150 / SARB42).